Reading from the N-terminus, the 206-residue chain is Translation initiation factor IF-3 (206 aa).

This sequence belongs to the IF-3 family. Monomer.

The protein localises to the cytoplasm. In terms of biological role, IF-3 binds to the 30S ribosomal subunit and shifts the equilibrium between 70S ribosomes and their 50S and 30S subunits in favor of the free subunits, thus enhancing the availability of 30S subunits on which protein synthesis initiation begins. The chain is Translation initiation factor IF-3 from Shigella flexneri.